The sequence spans 502 residues: Lysine--tRNA ligase (502 aa).

E403 and E410 together coordinate Mg(2+).

It belongs to the class-II aminoacyl-tRNA synthetase family. As to quaternary structure, homodimer. It depends on Mg(2+) as a cofactor.

Its subcellular location is the cytoplasm. The catalysed reaction is tRNA(Lys) + L-lysine + ATP = L-lysyl-tRNA(Lys) + AMP + diphosphate. The chain is Lysine--tRNA ligase from Synechococcus sp. (strain CC9605).